A 455-amino-acid chain; its full sequence is Phosphoglycerate kinase, glycosomal (455 aa).

The (2R)-3-phosphoglycerate site is built by Val23, Asp24, Phe25, Asn26, Arg39, Ser61, His62, Gly64, Arg65, Arg132, His168, and Arg169. Positions 214 and 215 each coordinate ADP. A CDP-binding site is contributed by Gly214. Ala215 and Lys216 together coordinate AMP. Residue Ala215 coordinates ATP. Ala215 is a binding site for Mg(2+). Lys216 lines the (2R)-3-phosphoglycerate pocket. Asp219 is a CDP binding site. Residue Asp219 coordinates Mg(2+). The ADP site is built by Lys220 and Gly238. Lys220 provides a ligand contact to AMP. Lys220 contributes to the ATP binding site. Gly238 serves as a coordination point for CDP. AMP-binding residues include Ala239 and Ala311. The ATP site is built by Ala239 and Ala311. Positions 311 and 335 each coordinate ADP. The CDP site is built by Gly336 and Phe341. Residues Phe341, Glu342, Asp374, and Thr375 each contribute to the ADP site. Glu342 provides a ligand contact to AMP. Residues Glu342, Asp374, and Thr375 each coordinate ATP. Asp374 contributes to the Mg(2+) binding site. A topogenic signal region spans residues Asp417–Pro455.

It belongs to the phosphoglycerate kinase family. Monomer. It depends on Mg(2+) as a cofactor.

It localises to the glycosome. It carries out the reaction (2R)-3-phosphoglycerate + ATP = (2R)-3-phospho-glyceroyl phosphate + ADP. It functions in the pathway carbohydrate degradation; glycolysis; pyruvate from D-glyceraldehyde 3-phosphate: step 2/5. The sequence is that of Phosphoglycerate kinase, glycosomal (PGKC) from Crithidia fasciculata.